The primary structure comprises 105 residues: Nucleoid-associated protein MW0434 (105 aa).

Residues 1–33 are disordered; the sequence is MRGGGNMQQMMKQMQKMQKKMAQEQEKLKEERI. The segment covering 7–16 has biased composition (low complexity); that stretch reads MQQMMKQMQK. Residues 21–33 show a composition bias toward basic and acidic residues; the sequence is MAQEQEKLKEERI.

The protein belongs to the YbaB/EbfC family. As to quaternary structure, homodimer.

It is found in the cytoplasm. It localises to the nucleoid. Its function is as follows. Binds to DNA and alters its conformation. May be involved in regulation of gene expression, nucleoid organization and DNA protection. The polypeptide is Nucleoid-associated protein MW0434 (Staphylococcus aureus (strain MW2)).